We begin with the raw amino-acid sequence, 185 residues long: Elongation factor P (185 aa).

The protein belongs to the elongation factor P family.

It localises to the cytoplasm. It functions in the pathway protein biosynthesis; polypeptide chain elongation. Its function is as follows. Involved in peptide bond synthesis. Stimulates efficient translation and peptide-bond synthesis on native or reconstituted 70S ribosomes in vitro. Probably functions indirectly by altering the affinity of the ribosome for aminoacyl-tRNA, thus increasing their reactivity as acceptors for peptidyl transferase. In Brevibacillus brevis (strain 47 / JCM 6285 / NBRC 100599), this protein is Elongation factor P.